The primary structure comprises 122 residues: Large ribosomal subunit protein uL14 (122 aa).

The protein belongs to the universal ribosomal protein uL14 family. In terms of assembly, part of the 50S ribosomal subunit. Forms a cluster with proteins L3 and L19. In the 70S ribosome, L14 and L19 interact and together make contacts with the 16S rRNA in bridges B5 and B8.

Functionally, binds to 23S rRNA. Forms part of two intersubunit bridges in the 70S ribosome. The protein is Large ribosomal subunit protein uL14 of Spiroplasma citri.